Consider the following 1343-residue polypeptide: MVYSYSEKKRIRKDFGKRPQVLDIPYLLSIQLDSFKKFTDQDPTGERGLEAAFRSVFPIKSFSGNSELQYVSYKLGEPVFDVKECQIRGVTYSAPLRVKLRMVLYDREAAPGTVKDIKEQEVYMGDIPLMTENGTFVINGTERVIVSQLHRSPGVFFDHDRGKTHSSGKVLYNARIIPYRGSWLDFEFDPKDALFVRIDRRRKLAASIILRALDYSTQDILDLFFERVQYKIKKDSLVMALVADRLRGETASYDIKDAEGNIIVEKGRRITARHIRQLEKTNTTELEVPVEYISGKIAAQDYIDPDTGEVLVSANAEISLEDLAKLSMAGIKDIDTLYVNELDHGAYISDTLRIDSTTNRLEALVEIYRMMRPGEPPTKDAAEALFQNLFFSEERYDLSKVGRMKFNRRLGIDDDEGTGILTKEDIVAVMQKIIEIRNGNDEVDDIDHLGNRRIRSVGEMAENQFRVGLVRVERAVRERLSLGDLNELMPQDLINAKPISAAVKEFFGSSQLSQFMDQNNPLSEVTHKRRISALGPGGLTRERAGFEVRDVHPTHYGRLCPIETPEGPNIGLINSLASFARTNSYGFLETPYRKVVDGVITDQVDYLSAIEEGRYVIAQANIEVDADGRMVEEQIACRHKGESTFMRAADVQYMDVSPQQIISVAASLIPFLEHDDANRALMGANMQRQAVPTLRADKPLVGTGIERTLAVDSGVVVAAKRGGYVDYVDASRIVVKVNEDELTPGEAGIDIYNLTKYTRSNQNTCINQRPCCSVGEPVVRGDVLADGPSTDLGDLALGQNMRIAFMPWNGYNFEDSILISERVAQEDRFTTIHIQELSCIARDTKLGSEEITADIPNVGESALSKLDESGIVYIGAEVKGGDILVGKVTPKGETQLTPEEKLLRAIFGEKASDVKDSSLRVPNSVKGTIIDVQVFTRDGVEKDKRAVEIEEMHIAQAKKDLTEEFKILEEGVFGRARNLLIGAGFAEAELDALPRPQLLVQTIEDETKQTELEQLAEQHEELKADFDKKFEIKRRKITQGDDLAPGVLKIVKVYLAVKRTIQPGDKMAGRHGNKGVISKINPIEDMPYDENGNPVDIVLNPLGVPSRMNIGQVLEVHLGAAAKGIGDRITAMLEEQRELAELRGYIKKVYELGEDVQQQVDIDSFTDEEVLRLAKNLKGGIPTATPAFDGAKEKEIKDMLELAGLPTSGQLKLFDGRTGNEFERPVTVGYMYMLKLNHLVDDKMHARSTGSYSLVTQQPLGGKAQFGGQRFGEMEVWALEAYGAAYTLQEMLTVKSDDVNGRTQMYKNIVDGNHQMQPGMPESFNVLLKEIRSLGINIELDQE.

Belongs to the RNA polymerase beta chain family. As to quaternary structure, the RNAP catalytic core consists of 2 alpha, 1 beta, 1 beta' and 1 omega subunit. When a sigma factor is associated with the core the holoenzyme is formed, which can initiate transcription.

The catalysed reaction is RNA(n) + a ribonucleoside 5'-triphosphate = RNA(n+1) + diphosphate. In terms of biological role, DNA-dependent RNA polymerase catalyzes the transcription of DNA into RNA using the four ribonucleoside triphosphates as substrates. In Shewanella loihica (strain ATCC BAA-1088 / PV-4), this protein is DNA-directed RNA polymerase subunit beta.